A 1034-amino-acid chain; its full sequence is Potassium-transporting ATPase alpha chain 1 (1034 aa).

Topologically, residues Gly2–Pro97 are cytoplasmic. 2 positions are modified to phosphotyrosine: Tyr7 and Tyr10. The disordered stretch occupies residues Glu13–Glu40. The span at Met26–Lys39 shows a compositional bias: basic residues. Ser27 is subject to Phosphoserine; by PKA and PKC. A helical transmembrane segment spans residues Glu98–Ala118. At Ala119 to Tyr141 the chain is on the lumenal side. A helical membrane pass occupies residues Leu142–Phe162. Residues Lys163–Ile298 are Cytoplasmic-facing. A disordered region spans residues Lys222–Glu244. The segment covering Asn225–Pro239 has biased composition (polar residues). Residues Glu299–Ile318 form a helical membrane-spanning segment. The Lumenal segment spans residues Val319 to Ala330. The chain crosses the membrane as a helical span at residues Met331–Ala348. K(+)-binding residues include Val339, Ala340, Val342, and Glu344. Residues Thr349–Leu782 lie on the Cytoplasmic side of the membrane. Asp386 serves as the catalytic 4-aspartylphosphate intermediate. Positions 386 and 388 each coordinate Mg(2+). A phosphoserine mark is found at Ser462 and Ser600. Mg(2+) contacts are provided by Asp727 and Asp731. The chain crosses the membrane as a helical span at residues Lys783–Ile802. Glu796 serves as a coordination point for K(+). At Tyr803–Leu812 the chain is on the lumenal side. A helical transmembrane segment spans residues Gly813–Ala833. A K(+)-binding site is contributed by Glu821. Residues Tyr834–Arg853 lie on the Cytoplasmic side of the membrane. Ser839 carries the post-translational modification Phosphoserine. The chain crosses the membrane as a helical span at residues Leu854 to Phe876. Residues Thr877–Cys928 are Lumenal-facing. A helical transmembrane segment spans residues Tyr929–Lys948. The Cytoplasmic segment spans residues Thr949–Asn962. Ser953 is subject to Phosphoserine; by PKA. The chain crosses the membrane as a helical span at residues Arg963 to Tyr981. Residues Cys982–Phe996 lie on the Lumenal side of the membrane. A helical membrane pass occupies residues Gln997–Lys1017. The Cytoplasmic segment spans residues Leu1018–Tyr1034.

Belongs to the cation transport ATPase (P-type) (TC 3.A.3) family. Type IIC subfamily. In terms of assembly, the gastric H(+)/K(+) ATPase pump is composed of the catalytic alpha subunit ATP4A and the regulatory beta subunit ATP4B. Interacts (via the P-domain) with ATP4B (via N-terminus); this interaction stabilizes the lumenal-open E2 conformation state and prevents the reverse reaction of the transport cycle.

It is found in the apical cell membrane. Its subcellular location is the cell membrane. The enzyme catalyses K(+)(out) + ATP + H2O + H(+)(in) = K(+)(in) + ADP + phosphate + 2 H(+)(out). Its activity is regulated as follows. Down-regulated by K(+)-competitive acid blockers (P-CABs) such as vonoprazan. Its function is as follows. The catalytic subunit of the gastric H(+)/K(+) ATPase pump which transports H(+) ions in exchange for K(+) ions across the apical membrane of parietal cells. Uses ATP as an energy source to pump H(+) ions to the gastric lumen while transporting K(+) ion from the lumen into the cell. Remarkably generates a million-fold proton gradient across the gastric parietal cell membrane, acidifying the gastric juice down to pH 1. Within a transport cycle, the transfer of a H(+) ion across the membrane is coupled to ATP hydrolysis and is associated with a transient phosphorylation that shifts the pump conformation from inward-facing (E1) to outward-facing state (E2). The release of the H(+) ion in the stomach lumen is followed by binding of K(+) ion converting the pump conformation back to the E1 state. The polypeptide is Potassium-transporting ATPase alpha chain 1 (ATP4A) (Sus scrofa (Pig)).